Reading from the N-terminus, the 480-residue chain is Glucosylglycerol phosphorylase (480 aa).

Aspartate 190 (nucleophile) is an active-site residue. Tyrosine 194 serves as a coordination point for substrate. Glutamate 231 serves as the catalytic Proton donor. Glutamine 336 provides a ligand contact to substrate.

It belongs to the glycosyl hydrolase 13 family. Sucrose phosphorylase subfamily.

It catalyses the reaction 2-O-(alpha-D-glucopyranosyl)glycerol + phosphate = alpha-D-glucose 1-phosphate + glycerol. Functionally, catalyzes the reversible phosphorolysis of 2-O-alpha-D-glucosylglycerol with retention of the anomeric configuration, forming alpha-D-glucose 1-phosphate and glycerol. Has most likely a catabolic role, either regulating the intracellular levels of glucosylglycerol, which acts as a compatible solute, or degrading it when the environmental conditions change. Cannot catalyze the phosphorolysis of sucrose or glucosylglycerate. The polypeptide is Glucosylglycerol phosphorylase (Marinobacter adhaerens (strain DSM 23420 / HP15)).